Consider the following 277-residue polypeptide: Large ribosomal subunit protein uL2 (277 aa).

The disordered stretch occupies residues 219-277 (TVRGSVMNPNDHPHGGGEGKAPVGRKAPSTPWGKPALGLKTRNKKAKSDKLIVRRRNEK). Basic and acidic residues predominate over residues 264-277 (AKSDKLIVRRRNEK).

This sequence belongs to the universal ribosomal protein uL2 family. In terms of assembly, part of the 50S ribosomal subunit. Forms a bridge to the 30S subunit in the 70S ribosome.

One of the primary rRNA binding proteins. Required for association of the 30S and 50S subunits to form the 70S ribosome, for tRNA binding and peptide bond formation. It has been suggested to have peptidyltransferase activity; this is somewhat controversial. Makes several contacts with the 16S rRNA in the 70S ribosome. The chain is Large ribosomal subunit protein uL2 from Streptococcus gordonii (strain Challis / ATCC 35105 / BCRC 15272 / CH1 / DL1 / V288).